The chain runs to 1374 residues: DNA-directed RNA polymerase subunit beta (1374 aa).

The protein belongs to the RNA polymerase beta chain family. The RNAP catalytic core consists of 2 alpha, 1 beta, 1 beta' and 1 omega subunit. When a sigma factor is associated with the core the holoenzyme is formed, which can initiate transcription.

The enzyme catalyses RNA(n) + a ribonucleoside 5'-triphosphate = RNA(n+1) + diphosphate. Functionally, DNA-dependent RNA polymerase catalyzes the transcription of DNA into RNA using the four ribonucleoside triphosphates as substrates. The polypeptide is DNA-directed RNA polymerase subunit beta (Rickettsia typhi (strain ATCC VR-144 / Wilmington)).